The chain runs to 186 residues: Ribosome-recycling factor (186 aa).

The protein belongs to the RRF family.

The protein resides in the cytoplasm. Its function is as follows. Responsible for the release of ribosomes from messenger RNA at the termination of protein biosynthesis. May increase the efficiency of translation by recycling ribosomes from one round of translation to another. This is Ribosome-recycling factor from Beijerinckia indica subsp. indica (strain ATCC 9039 / DSM 1715 / NCIMB 8712).